Here is a 274-residue protein sequence, read N- to C-terminus: 3-methyl-2-oxobutanoate hydroxymethyltransferase (274 aa).

Mg(2+)-binding residues include Asp-49 and Asp-88. Residues 49–50, Asp-88, and Lys-118 contribute to the 3-methyl-2-oxobutanoate site; that span reads DS. A Mg(2+)-binding site is contributed by Glu-120. Glu-187 acts as the Proton acceptor in catalysis.

It belongs to the PanB family. In terms of assembly, homodecamer; pentamer of dimers. The cofactor is Mg(2+).

The protein localises to the cytoplasm. The catalysed reaction is 3-methyl-2-oxobutanoate + (6R)-5,10-methylene-5,6,7,8-tetrahydrofolate + H2O = 2-dehydropantoate + (6S)-5,6,7,8-tetrahydrofolate. It functions in the pathway cofactor biosynthesis; (R)-pantothenate biosynthesis; (R)-pantoate from 3-methyl-2-oxobutanoate: step 1/2. Catalyzes the reversible reaction in which hydroxymethyl group from 5,10-methylenetetrahydrofolate is transferred onto alpha-ketoisovalerate to form ketopantoate. The protein is 3-methyl-2-oxobutanoate hydroxymethyltransferase of Nitrobacter winogradskyi (strain ATCC 25391 / DSM 10237 / CIP 104748 / NCIMB 11846 / Nb-255).